Here is a 401-residue protein sequence, read N- to C-terminus: Imidazolonepropionase (401 aa).

The Fe(3+) site is built by His-66 and His-68. His-66 and His-68 together coordinate Zn(2+). 4-imidazolone-5-propanoate contacts are provided by Arg-75, Tyr-138, and His-171. Tyr-138 is a binding site for N-formimidoyl-L-glutamate. Fe(3+) is bound at residue His-236. His-236 contacts Zn(2+). Gln-239 is a binding site for 4-imidazolone-5-propanoate. A Fe(3+)-binding site is contributed by Asp-311. Asp-311 is a Zn(2+) binding site. Residues Asn-313 and Gly-315 each coordinate N-formimidoyl-L-glutamate. Thr-316 lines the 4-imidazolone-5-propanoate pocket.

This sequence belongs to the metallo-dependent hydrolases superfamily. HutI family. The cofactor is Zn(2+). Fe(3+) is required as a cofactor.

The protein resides in the cytoplasm. It carries out the reaction 4-imidazolone-5-propanoate + H2O = N-formimidoyl-L-glutamate. The protein operates within amino-acid degradation; L-histidine degradation into L-glutamate; N-formimidoyl-L-glutamate from L-histidine: step 3/3. Its function is as follows. Catalyzes the hydrolytic cleavage of the carbon-nitrogen bond in imidazolone-5-propanoate to yield N-formimidoyl-L-glutamate. It is the third step in the universal histidine degradation pathway. This is Imidazolonepropionase from Pseudomonas putida (Arthrobacter siderocapsulatus).